The chain runs to 285 residues: Malectin (285 aa).

The first 26 residues, 1–26 (MRRVTLHCAARLVIAALWLLVEVCRA), serve as a signal peptide directing secretion. Residues 27-262 (ESGAQSLAER…TPNPYATDNS (236 aa)) are Lumenal-facing. Positions 71, 93, 120, 121, and 190 each coordinate a carbohydrate. Residues 209–258 (KLQPHPGLEKREEEEEEEEEGEGPEGEKKSASTSPKNPVRSGPRTPNPYA) form a disordered region. Residues 220–232 (EEEEEEEEEGEGP) show a composition bias toward acidic residues. The N-linked (GlcNAc...) asparagine glycan is linked to N261. Residues 263–283 (SLMFPILVAFGVFIPTLFCLC) form a helical membrane-spanning segment. The Cytoplasmic segment spans residues 284 to 285 (RL).

It belongs to the malectin family.

The protein resides in the endoplasmic reticulum membrane. In terms of biological role, carbohydrate-binding protein with a strong ligand preference for Glc2-N-glycan. May play a role in the early steps of protein N-glycosylation. The polypeptide is Malectin (Danio rerio (Zebrafish)).